Reading from the N-terminus, the 279-residue chain is S-formylglutathione hydrolase (279 aa).

Residues serine 150, aspartate 226, and histidine 258 each act as charge relay system in the active site.

It belongs to the esterase D family.

The catalysed reaction is S-formylglutathione + H2O = formate + glutathione + H(+). Functionally, serine hydrolase involved in the detoxification of formaldehyde. Hydrolyzes S-formylglutathione to glutathione and formate. The chain is S-formylglutathione hydrolase (fghA) from Paracoccus denitrificans (strain Pd 1222).